The sequence spans 26 residues: Alpha-amylase inhibitor 1 (26 aa).

It belongs to the protease inhibitor I6 (cereal trypsin/alpha-amylase inhibitor) family.

Its subcellular location is the secreted. Alpha-amylase inhibitor. The sequence is that of Alpha-amylase inhibitor 1 from Saussurea costus (Costus).